The chain runs to 425 residues: Tryptophan synthase beta chain (425 aa).

Lys107 carries the N6-(pyridoxal phosphate)lysine modification.

Belongs to the TrpB family. In terms of assembly, tetramer of two alpha and two beta chains. It depends on pyridoxal 5'-phosphate as a cofactor.

The catalysed reaction is (1S,2R)-1-C-(indol-3-yl)glycerol 3-phosphate + L-serine = D-glyceraldehyde 3-phosphate + L-tryptophan + H2O. It functions in the pathway amino-acid biosynthesis; L-tryptophan biosynthesis; L-tryptophan from chorismate: step 5/5. In terms of biological role, the beta subunit is responsible for the synthesis of L-tryptophan from indole and L-serine. The chain is Tryptophan synthase beta chain from Synechococcus sp. (strain JA-2-3B'a(2-13)) (Cyanobacteria bacterium Yellowstone B-Prime).